We begin with the raw amino-acid sequence, 71 residues long: Large ribosomal subunit protein bL31 (71 aa).

Positions 16, 18, 36, and 39 each coordinate Zn(2+).

The protein belongs to the bacterial ribosomal protein bL31 family. Type A subfamily. As to quaternary structure, part of the 50S ribosomal subunit. Zn(2+) is required as a cofactor.

Functionally, binds the 23S rRNA. The polypeptide is Large ribosomal subunit protein bL31 (Syntrophus aciditrophicus (strain SB)).